The sequence spans 450 residues: 23S rRNA (uracil(1939)-C(5))-methyltransferase RlmD (450 aa).

The 59-residue stretch at 12 to 70 (SKQLSAKLSLNVDQLDHLGAGIAQYQGKVVFIPGALPDETVTVQLTEQKKNYARAKLIK) folds into the TRAM domain. 4 residues coordinate [4Fe-4S] cluster: cysteine 83, cysteine 89, cysteine 92, and cysteine 171. S-adenosyl-L-methionine contacts are provided by glutamine 283, phenylalanine 312, asparagine 317, glutamate 333, aspartate 360, and aspartate 380. The active-site Nucleophile is the cysteine 406.

It belongs to the class I-like SAM-binding methyltransferase superfamily. RNA M5U methyltransferase family. RlmD subfamily.

It carries out the reaction uridine(1939) in 23S rRNA + S-adenosyl-L-methionine = 5-methyluridine(1939) in 23S rRNA + S-adenosyl-L-homocysteine + H(+). In terms of biological role, catalyzes the formation of 5-methyl-uridine at position 1939 (m5U1939) in 23S rRNA. This is 23S rRNA (uracil(1939)-C(5))-methyltransferase RlmD from Shewanella putrefaciens (strain CN-32 / ATCC BAA-453).